The primary structure comprises 27 residues: MLFKKISKFVGWLSGSSVGSITSKTHE.

The protein localises to the plastid. Its subcellular location is the chloroplast. This is an uncharacterized protein from Anthoceros angustus (Hornwort).